We begin with the raw amino-acid sequence, 49 residues long: uncharacterized protein (49 aa).

Residues 23 to 43 form a helical membrane-spanning segment; the sequence is LYVISFVLFIVLFFGMFFKLI.

It localises to the host membrane. This is an uncharacterized protein from Spiroplasma melliferum (SpV1).